A 216-amino-acid chain; its full sequence is MTKLTARQQQVFDLIRRAIERTGFPPTRAEIAAELGFSSANSAEEHLRALARKGVIELAAGASRGIRLLAGPEDSPHQFTLPHASIMQLSLPLIGRVAAGSPILAQEHISQHYACDPALFSSKPDYLLKVRGLSMRDAGIFDGDLLAVQKRSEAKDGQIIIARLGDDVTVKRLKRRPNGLELIAENPDYENIFVETGSAEFALEGIAVGLIRPGEF.

The segment at residues 28–48 (RAEIAAELGFSSANSAEEHLR) is a DNA-binding region (H-T-H motif). Active-site for autocatalytic cleavage activity residues include S134 and K171.

Belongs to the peptidase S24 family. Homodimer.

The catalysed reaction is Hydrolysis of Ala-|-Gly bond in repressor LexA.. Functionally, represses a number of genes involved in the response to DNA damage (SOS response), including recA and lexA. In the presence of single-stranded DNA, RecA interacts with LexA causing an autocatalytic cleavage which disrupts the DNA-binding part of LexA, leading to derepression of the SOS regulon and eventually DNA repair. This chain is LexA repressor, found in Paraburkholderia phytofirmans (strain DSM 17436 / LMG 22146 / PsJN) (Burkholderia phytofirmans).